Here is a 312-residue protein sequence, read N- to C-terminus: uncharacterized protein (312 aa).

This is an uncharacterized protein from Saccharomyces cerevisiae (strain ATCC 204508 / S288c) (Baker's yeast).